Here is a 318-residue protein sequence, read N- to C-terminus: UDP-N-acetylenolpyruvoylglucosamine reductase (318 aa).

The 164-residue stretch at 39–202 (VGGPADLLVR…TRVQLTLRPG (164 aa)) folds into the FAD-binding PCMH-type domain. R182 is a catalytic residue. Residues 214–223 (DRDGRRRTQP) show a composition bias toward basic and acidic residues. A disordered region spans residues 214-235 (DRDGRRRTQPLDRPTFGSTFTN). Residue S231 is the Proton donor of the active site. E301 is an active-site residue.

This sequence belongs to the MurB family. The cofactor is FAD.

It localises to the cytoplasm. It carries out the reaction UDP-N-acetyl-alpha-D-muramate + NADP(+) = UDP-N-acetyl-3-O-(1-carboxyvinyl)-alpha-D-glucosamine + NADPH + H(+). The protein operates within cell wall biogenesis; peptidoglycan biosynthesis. In terms of biological role, cell wall formation. The chain is UDP-N-acetylenolpyruvoylglucosamine reductase from Anaeromyxobacter sp. (strain Fw109-5).